Here is a 917-residue protein sequence, read N- to C-terminus: ABC transporter A family member 12 (917 aa).

Transmembrane regions (helical) follow at residues 34–54, 323–343, 377–397, 409–429, 435–455, and 508–528; these read LILVPLFLCLILLAIQQVLDA, IASLLGPLFFTWVVLLLFPVI, FLTISMLYVISLVGFGSAIGL, FVFYFIYSNLQISLAFLVSSI, TVTVIAYILVYGTGLLGSFLF, and GEVFCIMSVEWFLALIVAYYI. The ABC transporter domain maps to 595–832; it reads ILCDNLKKVY…YGGSYVFTMT (238 aa). ATP is bound at residue 633–640; that stretch reads GPNGAGKT.

This sequence belongs to the ABC transporter superfamily. ABCA family. CPR flippase (TC 3.A.1.211) subfamily.

Its subcellular location is the membrane. This Arabidopsis thaliana (Mouse-ear cress) protein is ABC transporter A family member 12 (ABCA12).